The following is a 78-amino-acid chain: Pigment-dispersing hormone peptides (78 aa).

The N-terminal stretch at 1–22 is a signal peptide; that stretch reads MRSAVIVTMLVVVALAALLTQG. A75 is subject to Alanine amide.

The protein belongs to the arthropod PDH family. As to expression, expressed in eyestalk tissue and cerebral ganglia.

The protein resides in the secreted. In terms of biological role, the pigment-dispersing hormone causes the migration of the distal retinal pigment into the proximal end of the pigment chromatophore cells and thus decreases the amount of light entering the retinulas. May also function as a neurotransmitter and/or neuromodulator. The chain is Pigment-dispersing hormone peptides from Carcinus maenas (Common shore crab).